Consider the following 120-residue polypeptide: Large ribosomal subunit protein bL19 (120 aa).

This sequence belongs to the bacterial ribosomal protein bL19 family.

Its function is as follows. This protein is located at the 30S-50S ribosomal subunit interface and may play a role in the structure and function of the aminoacyl-tRNA binding site. The chain is Large ribosomal subunit protein bL19 from Nostoc punctiforme (strain ATCC 29133 / PCC 73102).